We begin with the raw amino-acid sequence, 321 residues long: Lipoyl synthase (321 aa).

Residues Cys68, Cys73, Cys79, Cys94, Cys98, Cys101, and Ser308 each contribute to the [4Fe-4S] cluster site. The Radical SAM core domain maps to 80–297; that stretch reads FNHGTATFMI…KAEAMAMGFT (218 aa).

Belongs to the radical SAM superfamily. Lipoyl synthase family. It depends on [4Fe-4S] cluster as a cofactor.

It is found in the cytoplasm. It catalyses the reaction [[Fe-S] cluster scaffold protein carrying a second [4Fe-4S](2+) cluster] + N(6)-octanoyl-L-lysyl-[protein] + 2 oxidized [2Fe-2S]-[ferredoxin] + 2 S-adenosyl-L-methionine + 4 H(+) = [[Fe-S] cluster scaffold protein] + N(6)-[(R)-dihydrolipoyl]-L-lysyl-[protein] + 4 Fe(3+) + 2 hydrogen sulfide + 2 5'-deoxyadenosine + 2 L-methionine + 2 reduced [2Fe-2S]-[ferredoxin]. It participates in protein modification; protein lipoylation via endogenous pathway; protein N(6)-(lipoyl)lysine from octanoyl-[acyl-carrier-protein]: step 2/2. Its function is as follows. Catalyzes the radical-mediated insertion of two sulfur atoms into the C-6 and C-8 positions of the octanoyl moiety bound to the lipoyl domains of lipoate-dependent enzymes, thereby converting the octanoylated domains into lipoylated derivatives. This Pectobacterium atrosepticum (strain SCRI 1043 / ATCC BAA-672) (Erwinia carotovora subsp. atroseptica) protein is Lipoyl synthase.